The chain runs to 626 residues: PEX5-related protein (626 aa).

3 disordered regions span residues 1–20 (MYQG…LSSD), 118–167 (VSQT…SSLD), and 181–235 (KFHG…ASEL). Over residues 181 to 198 (KFHGDRNTKGHPMAERKS) the composition is skewed to basic and acidic residues. At Ser205 the chain carries Phosphoserine. Residues 225–235 (SALNSESASEL) show a composition bias toward low complexity. A phosphoserine mark is found at Ser253, Ser257, and Ser261. TPR repeat units follow at residues 326-359 (WPGA…DPGD), 360-393 (AEAW…QPNN), and 395-427 (KALM…NPKY). Residues Ser445 and Ser447 each carry the phosphoserine modification. 3 TPR repeats span residues 474–507 (PDLQ…RPED), 509–541 (SLWN…QPGF), and 543–575 (RSRY…QRKS).

Belongs to the peroxisomal targeting signal receptor family. As to quaternary structure, interacts with RAB8B. Forms an obligate 4:4 complex with HCN2. May interact with the C-terminal PTS1-type tripeptide peroxisomal targeting signal (SKL-type); the relevance of such interaction is however unclear. Interacts with HCN3. Interacts with HCN4 with a 4:4 HCN4:PEX5L stoichiometry; reduces the effects of cAMP on the voltage-dependence and rate of activation of HCN4. Mainly expressed in brain. Also expressed in pancreas, testis and pituitary.

Its subcellular location is the cytoplasm. It is found in the membrane. Functionally, accessory subunit of hyperpolarization-activated cyclic nucleotide-gated (HCN) channels, regulating their cell-surface expression and cyclic nucleotide dependence. This chain is PEX5-related protein (PEX5L), found in Homo sapiens (Human).